The chain runs to 870 residues: Lon protease (870 aa).

Residues 1 to 270 (MPTNSYRFLV…KLYEHIHTFA (270 aa)) form the Lon N-terminal domain. An ATP-binding site is contributed by 454–461 (GPPGTGKT). Residues 691–870 (SPQIGTVTGL…YQQIYDFIFK (180 aa)) enclose the Lon proteolytic domain. Active-site residues include Ser-777 and Lys-820.

Belongs to the peptidase S16 family. Homohexamer. Organized in a ring with a central cavity.

The protein resides in the cytoplasm. It carries out the reaction Hydrolysis of proteins in presence of ATP.. ATP-dependent serine protease that mediates the selective degradation of mutant and abnormal proteins as well as certain short-lived regulatory proteins. Required for cellular homeostasis and for survival from DNA damage and developmental changes induced by stress. Degrades polypeptides processively to yield small peptide fragments that are 5 to 10 amino acids long. Binds to DNA in a double-stranded, site-specific manner. In Mesomycoplasma hyopneumoniae (strain 232) (Mycoplasma hyopneumoniae), this protein is Lon protease.